We begin with the raw amino-acid sequence, 361 residues long: Feruloyl CoA ortho-hydroxylase 2 (361 aa).

The region spanning 211 to 312 is the Fe2OG dioxygenase domain; sequence GSTRINLNYY…RISVPIFVSP (102 aa). Position 220 (Tyr220) interacts with 2-oxoglutarate. Fe cation-binding residues include His235, Asp237, and His293. Residues Arg303 and Ser305 each contribute to the 2-oxoglutarate site.

The protein belongs to the iron/ascorbate-dependent oxidoreductase family. It depends on L-ascorbate as a cofactor. Fe(2+) is required as a cofactor. In terms of tissue distribution, low expression in roots.

It carries out the reaction (E)-feruloyl-CoA + 2-oxoglutarate + O2 = (E)-6-hydroxyferuloyl-CoA + succinate + CO2. The enzyme catalyses (E)-6-hydroxyferuloyl-CoA = scopoletin + CoA. Functionally, 2-oxoglutarate (OG)- and Fe(II)-dependent dioxygenase (2OGD)involved in scopoletin biosynthesis. Converts feruloyl CoA into 6'-hydroxyferuloyl CoA but has no activity with ferulic acid, feruloylquinic acid, caffeic acid, caffeoyl CoA, p-coumaric acid, cinnamic acid, cinnamoyl CoA or benzoyl CoA. This chain is Feruloyl CoA ortho-hydroxylase 2, found in Arabidopsis thaliana (Mouse-ear cress).